A 217-amino-acid polypeptide reads, in one-letter code: Protein-L-isoaspartate O-methyltransferase (217 aa).

Ser-65 is an active-site residue.

The protein belongs to the methyltransferase superfamily. L-isoaspartyl/D-aspartyl protein methyltransferase family.

The protein localises to the cytoplasm. The catalysed reaction is [protein]-L-isoaspartate + S-adenosyl-L-methionine = [protein]-L-isoaspartate alpha-methyl ester + S-adenosyl-L-homocysteine. Catalyzes the methyl esterification of L-isoaspartyl residues in peptides and proteins that result from spontaneous decomposition of normal L-aspartyl and L-asparaginyl residues. It plays a role in the repair and/or degradation of damaged proteins. This is Protein-L-isoaspartate O-methyltransferase from Methanoregula boonei (strain DSM 21154 / JCM 14090 / 6A8).